The chain runs to 84 residues: Small ribosomal subunit protein bS18B (84 aa).

The protein belongs to the bacterial ribosomal protein bS18 family. As to quaternary structure, part of the 30S ribosomal subunit. Forms a tight heterodimer with protein bS6.

Functionally, binds as a heterodimer with protein bS6 to the central domain of the 16S rRNA, where it helps stabilize the platform of the 30S subunit. The sequence is that of Small ribosomal subunit protein bS18B from Mycolicibacterium smegmatis (strain ATCC 700084 / mc(2)155) (Mycobacterium smegmatis).